A 95-amino-acid chain; its full sequence is Small ribosomal subunit protein bS18 (95 aa).

This sequence belongs to the bacterial ribosomal protein bS18 family. Part of the 30S ribosomal subunit. Forms a tight heterodimer with protein bS6.

Its function is as follows. Binds as a heterodimer with protein bS6 to the central domain of the 16S rRNA, where it helps stabilize the platform of the 30S subunit. The sequence is that of Small ribosomal subunit protein bS18 from Rickettsia canadensis (strain McKiel).